Consider the following 578-residue polypeptide: Laccase-10 (578 aa).

The signal sequence occupies residues Met-1 to Ala-29. 2 Plastocyanin-like domains span residues Asn-37 to Gly-153 and Lys-163 to Pro-319. Residues Asn-42 and Asn-83 are each glycosylated (N-linked (GlcNAc...) asparagine). Cu cation is bound by residues His-87 and His-89. Asn-119 carries an N-linked (GlcNAc...) asparagine glycan. 2 residues coordinate Cu cation: His-132 and His-134. 13 N-linked (GlcNAc...) asparagine glycosylation sites follow: Asn-192, Asn-208, Asn-244, Asn-307, Asn-336, Asn-384, Asn-392, Asn-402, Asn-438, Asn-445, Asn-448, Asn-451, and Asn-461. Positions Asp-428–Pro-562 constitute a Plastocyanin-like 3 domain. 7 residues coordinate Cu cation: His-479, His-482, His-484, His-541, Cys-542, His-543, and His-547.

Belongs to the multicopper oxidase family. It depends on Cu cation as a cofactor.

The protein resides in the secreted. It localises to the extracellular space. Its subcellular location is the apoplast. The enzyme catalyses 4 hydroquinone + O2 = 4 benzosemiquinone + 2 H2O. Its function is as follows. Lignin degradation and detoxification of lignin-derived products. This Oryza sativa subsp. japonica (Rice) protein is Laccase-10 (LAC10).